The following is a 186-amino-acid chain: Large ribosomal subunit protein uL5 (186 aa).

The protein belongs to the universal ribosomal protein uL5 family. Part of the 50S ribosomal subunit; part of the 5S rRNA/L5/L18/L25 subcomplex. Contacts the 5S rRNA and the P site tRNA. Forms a bridge to the 30S subunit in the 70S ribosome.

In terms of biological role, this is one of the proteins that bind and probably mediate the attachment of the 5S RNA into the large ribosomal subunit, where it forms part of the central protuberance. In the 70S ribosome it contacts protein S13 of the 30S subunit (bridge B1b), connecting the 2 subunits; this bridge is implicated in subunit movement. Contacts the P site tRNA; the 5S rRNA and some of its associated proteins might help stabilize positioning of ribosome-bound tRNAs. The protein is Large ribosomal subunit protein uL5 of Legionella pneumophila subsp. pneumophila (strain Philadelphia 1 / ATCC 33152 / DSM 7513).